The sequence spans 302 residues: Nucleotide-binding protein Bamb_2855 (302 aa).

8–15 contributes to the ATP binding site; sequence GISGSGKS. 57–60 serves as a coordination point for GTP; sequence DARS.

This sequence belongs to the RapZ-like family.

Displays ATPase and GTPase activities. This Burkholderia ambifaria (strain ATCC BAA-244 / DSM 16087 / CCUG 44356 / LMG 19182 / AMMD) (Burkholderia cepacia (strain AMMD)) protein is Nucleotide-binding protein Bamb_2855.